The primary structure comprises 226 residues: Orotate phosphoribosyltransferase (226 aa).

Position 30 (K30) interacts with 5-phospho-alpha-D-ribose 1-diphosphate. Residue 38 to 39 (FF) participates in orotate binding. 5-phospho-alpha-D-ribose 1-diphosphate-binding positions include 76-77 (YK), R106, K107, K110, H112, and 132-140 (DDVMTAGTA). Residues T136 and R164 each contribute to the orotate site.

This sequence belongs to the purine/pyrimidine phosphoribosyltransferase family. PyrE subfamily. In terms of assembly, homodimer.

It carries out the reaction orotidine 5'-phosphate + diphosphate = orotate + 5-phospho-alpha-D-ribose 1-diphosphate. The protein operates within pyrimidine metabolism; UMP biosynthesis via de novo pathway; UMP from orotate: step 1/2. In terms of biological role, catalyzes the transfer of a ribosyl phosphate group from 5-phosphoribose 1-diphosphate to orotate, leading to the formation of orotidine monophosphate (OMP). In Kluyveromyces lactis (strain ATCC 8585 / CBS 2359 / DSM 70799 / NBRC 1267 / NRRL Y-1140 / WM37) (Yeast), this protein is Orotate phosphoribosyltransferase (URA5).